The chain runs to 508 residues: Phosphoglycerate kinase A (508 aa).

V32, D33, F34, N35, R48, S70, H71, G73, R74, R224, H260, and R261 together coordinate (2R)-3-phosphoglycerate. G306 and A307 together coordinate ADP. Residue G306 participates in CDP binding. The AMP site is built by A307 and K308. A307 serves as a coordination point for ATP. A307 contacts Mg(2+). K308 serves as a coordination point for (2R)-3-phosphoglycerate. E311 is a binding site for CDP. E311 is a Mg(2+) binding site. The ADP site is built by K312 and G330. K312 is a binding site for AMP. Position 312 (K312) interacts with ATP. G330 contributes to the CDP binding site. Residues A331 and A403 each coordinate AMP. A331 and A403 together coordinate ATP. ADP is bound by residues A403 and N427. Residues G428 and F433 each coordinate CDP. Positions 433, 434, 466, and 467 each coordinate ADP. E434 is an AMP binding site. Residues E434, E466, and S467 each coordinate ATP. E466 is a binding site for Mg(2+).

The protein belongs to the phosphoglycerate kinase family. Monomer. It depends on Mg(2+) as a cofactor.

The catalysed reaction is (2R)-3-phosphoglycerate + ATP = (2R)-3-phospho-glyceroyl phosphate + ADP. Its pathway is carbohydrate degradation; glycolysis; pyruvate from D-glyceraldehyde 3-phosphate: step 2/5. In Trypanosoma brucei brucei, this protein is Phosphoglycerate kinase A.